A 120-amino-acid polypeptide reads, in one-letter code: NAD(P)H-quinone oxidoreductase subunit 3, chloroplastic (120 aa).

Transmembrane regions (helical) follow at residues 2 to 22 (FLLYEYDIFWAFLIISSVIPI), 64 to 84 (MFALVFVVFDVETIFLYPWAL), and 88 to 108 (ILGVSVFIEALIFVLILVLGL).

Belongs to the complex I subunit 3 family. As to quaternary structure, NDH is composed of at least 16 different subunits, 5 of which are encoded in the nucleus.

Its subcellular location is the plastid. The protein localises to the chloroplast thylakoid membrane. It carries out the reaction a plastoquinone + NADH + (n+1) H(+)(in) = a plastoquinol + NAD(+) + n H(+)(out). It catalyses the reaction a plastoquinone + NADPH + (n+1) H(+)(in) = a plastoquinol + NADP(+) + n H(+)(out). In terms of biological role, NDH shuttles electrons from NAD(P)H:plastoquinone, via FMN and iron-sulfur (Fe-S) centers, to quinones in the photosynthetic chain and possibly in a chloroplast respiratory chain. The immediate electron acceptor for the enzyme in this species is believed to be plastoquinone. Couples the redox reaction to proton translocation, and thus conserves the redox energy in a proton gradient. This chain is NAD(P)H-quinone oxidoreductase subunit 3, chloroplastic, found in Oenothera biennis (German evening primrose).